The sequence spans 505 residues: Cytochrome P450 monooxygenase efuB (505 aa).

The chain crosses the membrane as a helical span at residues 12-34; the sequence is GFWPTVAGTVATYLFYQIVATVY. Residue Cys450 coordinates heme.

It belongs to the cytochrome P450 family. It depends on heme as a cofactor.

It is found in the membrane. It functions in the pathway secondary metabolite biosynthesis; terpenoid biosynthesis. Functionally, cytochrome P450 monooxygenase; part of the gene cluster that mediates the biosynthesis of enfumafungin, a glycosylated fernene-type triterpenoid with potent antifungal activity, mediated by its interaction with beta-1,3-glucan synthase and the fungal cell wall. The pathway begins with the terpene cyclase-glycosyl transferase fusion protein that most likely uses 2,3-oxidosqualene as substrate and catalyzes glycosylation immediately after cyclization. The fernene glycoside then could be processed by the desaturase efuI which catalyzes isomerization of a double bond established by efuA to form the core structure. The latter would then undergo a series of hydroxylations in unknown order at C-2, C-19, C-23 and C-25, which would be catalyzed by two of the three cytochrome P450 monooxygenases efuB, efuG or efuH. The hydroxy-group at C-25 becomes oxidized by the dehydrogenase efuE to enable a spontaneous, non-enzymatic hemiacetal formation with C-23. After hydroxylation at C-2, acetylation by the acetyltransferase efuC takes place. The final steps in enfumafungin biosynthesis require expansion of the 5-membered ring by lactonization via a Baeyer-Villiger reaction mediated by one of the BGC's cytochrome P450 monooxygenases (efuB, efuG or efuH) followed by ring cleavage. This type of reaction would establish a double bond between C-20 and C-21 which could be reduced by the reductase efuL to form the final product. The polypeptide is Cytochrome P450 monooxygenase efuB (Hormonema carpetanum).